The following is a 290-amino-acid chain: Probable septum site-determining protein MinC (290 aa).

It belongs to the MinC family. Interacts with MinD and FtsZ.

In terms of biological role, cell division inhibitor that blocks the formation of polar Z ring septums. Rapidly oscillates between the poles of the cell to destabilize FtsZ filaments that have formed before they mature into polar Z rings. Prevents FtsZ polymerization. This chain is Probable septum site-determining protein MinC, found in Heliobacterium modesticaldum (strain ATCC 51547 / Ice1).